The following is a 563-amino-acid chain: Formate--tetrahydrofolate ligase (563 aa).

ATP is bound at residue Thr65–Thr72.

Belongs to the formate--tetrahydrofolate ligase family.

It catalyses the reaction (6S)-5,6,7,8-tetrahydrofolate + formate + ATP = (6R)-10-formyltetrahydrofolate + ADP + phosphate. It functions in the pathway one-carbon metabolism; tetrahydrofolate interconversion. This Cutibacterium acnes (strain DSM 16379 / KPA171202) (Propionibacterium acnes) protein is Formate--tetrahydrofolate ligase.